Reading from the N-terminus, the 160-residue chain is Dihydrofolate reductase (160 aa).

The region spanning 1–160 is the DHFR domain; that stretch reads MVKAIWAMDQ…KVAYYHKIAR (160 aa). Residue 5–7 coordinates substrate; the sequence is IWA. NADP(+) is bound by residues 6 to 7 and 14 to 19; these read WA and IGNGNS. Substrate-binding residues include glutamate 27 and arginine 32. Position 43–46 (43–46) interacts with NADP(+); sequence GSAT. Residue arginine 57 coordinates substrate. Residues 62–65 and 101–106 contribute to the NADP(+) site; these read LTRN and CGGAQV. A substrate-binding site is contributed by serine 120.

The protein belongs to the dihydrofolate reductase family.

The enzyme catalyses (6S)-5,6,7,8-tetrahydrofolate + NADP(+) = 7,8-dihydrofolate + NADPH + H(+). Its pathway is cofactor biosynthesis; tetrahydrofolate biosynthesis; 5,6,7,8-tetrahydrofolate from 7,8-dihydrofolate: step 1/1. Functionally, key enzyme in folate metabolism. Catalyzes an essential reaction for de novo glycine and purine synthesis, and for DNA precursor synthesis. The chain is Dihydrofolate reductase (folA) from Mycoplasma pneumoniae (strain ATCC 29342 / M129 / Subtype 1) (Mycoplasmoides pneumoniae).